A 622-amino-acid chain; its full sequence is DNA topoisomerase 3 (622 aa).

One can recognise a Toprim domain in the interval 2 to 148 (RVLCVAEKNS…SIQVIRADFN (147 aa)). Residues 166–596 (SKNAADAVDA…MILTQFRDVF (431 aa)) form the Topo IA-type catalytic domain. Residue Tyr-330 is the O-(5'-phospho-DNA)-tyrosine intermediate of the active site.

This sequence belongs to the type IA topoisomerase family. In terms of assembly, interacts with hus2.

It carries out the reaction ATP-independent breakage of single-stranded DNA, followed by passage and rejoining.. Releases the supercoiling and torsional tension of DNA introduced during the DNA replication and transcription by transiently cleaving and rejoining one strand of the DNA duplex. Introduces a single-strand break via transesterification at a target site in duplex DNA. The scissile phosphodiester is attacked by the catalytic tyrosine of the enzyme, resulting in the formation of a DNA-(5'-phosphotyrosyl)-enzyme intermediate and the expulsion of a 3'-OH DNA strand. The free DNA strand than undergoes passage around the unbroken strand thus removing DNA supercoils. Finally, in the religation step, the DNA 3'-OH attacks the covalent intermediate to expel the active-site tyrosine and restore the DNA phosphodiester backbone. This Schizosaccharomyces pombe (strain 972 / ATCC 24843) (Fission yeast) protein is DNA topoisomerase 3 (top3).